The sequence spans 150 residues: Large ribosomal subunit protein uL13 (150 aa).

This sequence belongs to the universal ribosomal protein uL13 family. As to quaternary structure, part of the 50S ribosomal subunit.

Its function is as follows. This protein is one of the early assembly proteins of the 50S ribosomal subunit, although it is not seen to bind rRNA by itself. It is important during the early stages of 50S assembly. This chain is Large ribosomal subunit protein uL13, found in Chlamydia muridarum (strain MoPn / Nigg).